The sequence spans 159 residues: 2-C-methyl-D-erythritol 2,4-cyclodiphosphate synthase (159 aa).

A divalent metal cation contacts are provided by aspartate 10 and histidine 12. Residues 10 to 12 (DVH) and 36 to 37 (HS) each bind 4-CDP-2-C-methyl-D-erythritol 2-phosphate. Histidine 44 is an a divalent metal cation binding site. 4-CDP-2-C-methyl-D-erythritol 2-phosphate contacts are provided by residues 58–60 (DIG), 134–137 (TTTE), phenylalanine 141, and arginine 144.

The protein belongs to the IspF family. In terms of assembly, homotrimer. It depends on a divalent metal cation as a cofactor.

It carries out the reaction 4-CDP-2-C-methyl-D-erythritol 2-phosphate = 2-C-methyl-D-erythritol 2,4-cyclic diphosphate + CMP. Its pathway is isoprenoid biosynthesis; isopentenyl diphosphate biosynthesis via DXP pathway; isopentenyl diphosphate from 1-deoxy-D-xylulose 5-phosphate: step 4/6. Its function is as follows. Involved in the biosynthesis of isopentenyl diphosphate (IPP) and dimethylallyl diphosphate (DMAPP), two major building blocks of isoprenoid compounds. Catalyzes the conversion of 4-diphosphocytidyl-2-C-methyl-D-erythritol 2-phosphate (CDP-ME2P) to 2-C-methyl-D-erythritol 2,4-cyclodiphosphate (ME-CPP) with a corresponding release of cytidine 5-monophosphate (CMP). The protein is 2-C-methyl-D-erythritol 2,4-cyclodiphosphate synthase of Bacteroides fragilis (strain ATCC 25285 / DSM 2151 / CCUG 4856 / JCM 11019 / LMG 10263 / NCTC 9343 / Onslow / VPI 2553 / EN-2).